A 583-amino-acid polypeptide reads, in one-letter code: Probable lysosomal cobalamin transporter (583 aa).

10 helical membrane passes run 8–28 (LIWA…SVFI), 41–61 (VILT…LVPV), 95–115 (IVYY…IPFI), 145–165 (TVSF…VPVA), 188–208 (ALTF…VLYT), 312–332 (LLSG…MLLT), 347–367 (GYIL…VQSA), 375–395 (VIFT…ISAV), 418–438 (LLAT…TSMI), and 506–526 (FFGA…LLVM). A compositionally biased stretch (acidic residues) spans 541–552 (LDEDAEEAEEES). The interval 541 to 562 (LDEDAEEAEEESLLANTRGRAE) is disordered.

It belongs to the LIMR family. LMBRD1 subfamily.

Its subcellular location is the lysosome membrane. Functionally, probable lysosomal cobalamin transporter. Required to export cobalamin from lysosomes allowing its conversion to cofactors. In Aspergillus oryzae (strain ATCC 42149 / RIB 40) (Yellow koji mold), this protein is Probable lysosomal cobalamin transporter.